Consider the following 328-residue polypeptide: Alpha-tubulin N-acetyltransferase 2 (328 aa).

An N-acetyltransferase domain is found at 5-185; that stretch reads SQVALLPKLS…NNFVVFHRYF (181 aa). Acetyl-CoA-binding positions include 119 to 132 and 155 to 164; these read FFVDTSFQRKGFGK and SVKFLAFLRK. 2 disordered regions span residues 219–261 and 282–328; these read EYQS…PGKK and GGDP…TPEH. Positions 238-248 are enriched in pro residues; the sequence is TPPPPLPPPLV. The segment covering 312–328 has biased composition (polar residues); the sequence is PTRSGVQYNIISGTPEH.

It belongs to the acetyltransferase ATAT1 family.

It catalyses the reaction L-lysyl-[alpha-tubulin] + acetyl-CoA = N(6)-acetyl-L-lysyl-[alpha-tubulin] + CoA + H(+). Specifically acetylates 'Lys-40' in alpha-tubulin on the lumenal side of microtubules. Promotes microtubule destabilization and accelerates microtubule dynamics; this activity may be independent of acetylation activity. Acetylates alpha-tubulin with a slow enzymatic rate, due to a catalytic site that is not optimized for acetyl transfer. Enters the microtubule through each end and diffuses quickly throughout the lumen of microtubules. Acetylates only long/old microtubules because of its slow acetylation rate since it does not have time to act on dynamically unstable microtubules before the enzyme is released. In Trypanosoma cruzi (strain CL Brener), this protein is Alpha-tubulin N-acetyltransferase 2.